The primary structure comprises 456 residues: ATP-dependent protease ATPase subunit HslU (456 aa).

ATP is bound by residues I18, 60–65 (GVGKTE), D270, E334, and R406.

The protein belongs to the ClpX chaperone family. HslU subfamily. As to quaternary structure, a double ring-shaped homohexamer of HslV is capped on each side by a ring-shaped HslU homohexamer. The assembly of the HslU/HslV complex is dependent on binding of ATP.

It localises to the cytoplasm. In terms of biological role, ATPase subunit of a proteasome-like degradation complex; this subunit has chaperone activity. The binding of ATP and its subsequent hydrolysis by HslU are essential for unfolding of protein substrates subsequently hydrolyzed by HslV. HslU recognizes the N-terminal part of its protein substrates and unfolds these before they are guided to HslV for hydrolysis. This chain is ATP-dependent protease ATPase subunit HslU, found in Exiguobacterium sibiricum (strain DSM 17290 / CCUG 55495 / CIP 109462 / JCM 13490 / 255-15).